Here is a 184-residue protein sequence, read N- to C-terminus: NADH-quinone oxidoreductase subunit B (184 aa).

Positions 37, 38, 103, and 132 each coordinate [4Fe-4S] cluster.

The protein belongs to the complex I 20 kDa subunit family. In terms of assembly, NDH-1 is composed of 14 different subunits. Subunits NuoB, C, D, E, F, and G constitute the peripheral sector of the complex. It depends on [4Fe-4S] cluster as a cofactor.

It localises to the cell membrane. The catalysed reaction is a quinone + NADH + 5 H(+)(in) = a quinol + NAD(+) + 4 H(+)(out). Functionally, NDH-1 shuttles electrons from NADH, via FMN and iron-sulfur (Fe-S) centers, to quinones in the respiratory chain. The immediate electron acceptor for the enzyme in this species is believed to be a menaquinone. Couples the redox reaction to proton translocation (for every two electrons transferred, four hydrogen ions are translocated across the cytoplasmic membrane), and thus conserves the redox energy in a proton gradient. The polypeptide is NADH-quinone oxidoreductase subunit B (Beutenbergia cavernae (strain ATCC BAA-8 / DSM 12333 / CCUG 43141 / JCM 11478 / NBRC 16432 / NCIMB 13614 / HKI 0122)).